The following is a 299-amino-acid chain: Pyridoxal 5'-phosphate synthase subunit PdxS (299 aa).

D24 is a binding site for D-ribose 5-phosphate. Residue K81 is the Schiff-base intermediate with D-ribose 5-phosphate of the active site. G153 contributes to the D-ribose 5-phosphate binding site. Residue R165 participates in D-glyceraldehyde 3-phosphate binding. Residues G219 and 240–241 (GS) each bind D-ribose 5-phosphate.

The protein belongs to the PdxS/SNZ family. In terms of assembly, in the presence of PdxT, forms a dodecamer of heterodimers.

The enzyme catalyses aldehydo-D-ribose 5-phosphate + D-glyceraldehyde 3-phosphate + L-glutamine = pyridoxal 5'-phosphate + L-glutamate + phosphate + 3 H2O + H(+). It participates in cofactor biosynthesis; pyridoxal 5'-phosphate biosynthesis. Its function is as follows. Catalyzes the formation of pyridoxal 5'-phosphate from ribose 5-phosphate (RBP), glyceraldehyde 3-phosphate (G3P) and ammonia. The ammonia is provided by the PdxT subunit. Can also use ribulose 5-phosphate and dihydroxyacetone phosphate as substrates, resulting from enzyme-catalyzed isomerization of RBP and G3P, respectively. The protein is Pyridoxal 5'-phosphate synthase subunit PdxS of Methanococcus maripaludis (strain C6 / ATCC BAA-1332).